Here is a 539-residue protein sequence, read N- to C-terminus: GMP synthase [glutamine-hydrolyzing] (539 aa).

A Glutamine amidotransferase type-1 domain is found at 4 to 202; that stretch reads KILILDFGSQ…VLQIAGAKPD (199 aa). The active-site Nucleophile is Cys81. Catalysis depends on residues His176 and Glu178. The region spanning 203–395 is the GMPS ATP-PPase domain; sequence WIMSNHIEEA…LGLPPEMVYR (193 aa). 230 to 236 contacts ATP; that stretch reads SGGVDSS.

In terms of assembly, homodimer.

The catalysed reaction is XMP + L-glutamine + ATP + H2O = GMP + L-glutamate + AMP + diphosphate + 2 H(+). It participates in purine metabolism; GMP biosynthesis; GMP from XMP (L-Gln route): step 1/1. Functionally, catalyzes the synthesis of GMP from XMP. This Burkholderia ambifaria (strain ATCC BAA-244 / DSM 16087 / CCUG 44356 / LMG 19182 / AMMD) (Burkholderia cepacia (strain AMMD)) protein is GMP synthase [glutamine-hydrolyzing].